Reading from the N-terminus, the 739-residue chain is ABC transporter G family member 20 (739 aa).

The 264-residue stretch at L88 to E351 folds into the ABC transporter domain. Residue G144–S151 coordinates ATP. The 211-residue stretch at T433–F643 folds into the ABC transmembrane type-2 domain. 6 helical membrane-spanning segments follow: residues L452 to W472, F487 to L507, V528 to A548, F563 to F583, I593 to I613, and L712 to I732.

This sequence belongs to the ABC transporter superfamily. ABCG family. Eye pigment precursor importer (TC 3.A.1.204) subfamily.

It localises to the membrane. In Arabidopsis thaliana (Mouse-ear cress), this protein is ABC transporter G family member 20 (ABCG20).